The primary structure comprises 505 residues: L-arabinose isomerase (505 aa).

Positions 308, 335, 352, and 453 each coordinate Mn(2+).

This sequence belongs to the arabinose isomerase family. The cofactor is Mn(2+).

It carries out the reaction beta-L-arabinopyranose = L-ribulose. The protein operates within carbohydrate degradation; L-arabinose degradation via L-ribulose; D-xylulose 5-phosphate from L-arabinose (bacterial route): step 1/3. Catalyzes the conversion of L-arabinose to L-ribulose. The protein is L-arabinose isomerase of Bifidobacterium animalis subsp. lactis (strain AD011).